Reading from the N-terminus, the 180-residue chain is Cytidylate kinase (180 aa).

An ATP-binding site is contributed by 7–15; sequence GLPGSGTST.

The protein belongs to the cytidylate kinase family. Type 2 subfamily.

It localises to the cytoplasm. The catalysed reaction is CMP + ATP = CDP + ADP. It catalyses the reaction dCMP + ATP = dCDP + ADP. The chain is Cytidylate kinase (cmk) from Methanosarcina mazei (strain ATCC BAA-159 / DSM 3647 / Goe1 / Go1 / JCM 11833 / OCM 88) (Methanosarcina frisia).